Reading from the N-terminus, the 227-residue chain is Cytochrome c oxidase subunit 2 (227 aa).

The Mitochondrial intermembrane segment spans residues 1–14 (MAYPFQLGFQDASS). Residues 15-45 (PIMEELLHFHDHTLMIVFLISSLVLYIISLM) traverse the membrane as a helical segment. Topologically, residues 46–59 (LTTKLTHTSTMDAQ) are mitochondrial matrix. The chain crosses the membrane as a helical span at residues 60–87 (EVETIWTILPAIILILIALPSLRILYMM). Topologically, residues 88–227 (DEINNPSLTV…HFENWSLSMI (140 aa)) are mitochondrial intermembrane. Cu cation contacts are provided by His-161, Cys-196, Glu-198, Cys-200, His-204, and Met-207. Glu-198 serves as a coordination point for Mg(2+).

Belongs to the cytochrome c oxidase subunit 2 family. As to quaternary structure, component of the cytochrome c oxidase (complex IV, CIV), a multisubunit enzyme composed of 14 subunits. The complex is composed of a catalytic core of 3 subunits MT-CO1, MT-CO2 and MT-CO3, encoded in the mitochondrial DNA, and 11 supernumerary subunits COX4I, COX5A, COX5B, COX6A, COX6B, COX6C, COX7A, COX7B, COX7C, COX8 and NDUFA4, which are encoded in the nuclear genome. The complex exists as a monomer or a dimer and forms supercomplexes (SCs) in the inner mitochondrial membrane with NADH-ubiquinone oxidoreductase (complex I, CI) and ubiquinol-cytochrome c oxidoreductase (cytochrome b-c1 complex, complex III, CIII), resulting in different assemblies (supercomplex SCI(1)III(2)IV(1) and megacomplex MCI(2)III(2)IV(2)). Found in a complex with TMEM177, COA6, COX18, COX20, SCO1 and SCO2. Interacts with TMEM177 in a COX20-dependent manner. Interacts with COX20. Interacts with COX16. Cu cation is required as a cofactor.

It localises to the mitochondrion inner membrane. It catalyses the reaction 4 Fe(II)-[cytochrome c] + O2 + 8 H(+)(in) = 4 Fe(III)-[cytochrome c] + 2 H2O + 4 H(+)(out). Component of the cytochrome c oxidase, the last enzyme in the mitochondrial electron transport chain which drives oxidative phosphorylation. The respiratory chain contains 3 multisubunit complexes succinate dehydrogenase (complex II, CII), ubiquinol-cytochrome c oxidoreductase (cytochrome b-c1 complex, complex III, CIII) and cytochrome c oxidase (complex IV, CIV), that cooperate to transfer electrons derived from NADH and succinate to molecular oxygen, creating an electrochemical gradient over the inner membrane that drives transmembrane transport and the ATP synthase. Cytochrome c oxidase is the component of the respiratory chain that catalyzes the reduction of oxygen to water. Electrons originating from reduced cytochrome c in the intermembrane space (IMS) are transferred via the dinuclear copper A center (CU(A)) of subunit 2 and heme A of subunit 1 to the active site in subunit 1, a binuclear center (BNC) formed by heme A3 and copper B (CU(B)). The BNC reduces molecular oxygen to 2 water molecules using 4 electrons from cytochrome c in the IMS and 4 protons from the mitochondrial matrix. This chain is Cytochrome c oxidase subunit 2 (MT-CO2), found in Oryctolagus cuniculus (Rabbit).